The primary structure comprises 453 residues: Exodeoxyribonuclease 7 large subunit (453 aa).

Belongs to the XseA family. In terms of assembly, heterooligomer composed of large and small subunits.

It is found in the cytoplasm. The enzyme catalyses Exonucleolytic cleavage in either 5'- to 3'- or 3'- to 5'-direction to yield nucleoside 5'-phosphates.. Its function is as follows. Bidirectionally degrades single-stranded DNA into large acid-insoluble oligonucleotides, which are then degraded further into small acid-soluble oligonucleotides. The chain is Exodeoxyribonuclease 7 large subunit from Rickettsia typhi (strain ATCC VR-144 / Wilmington).